Reading from the N-terminus, the 463-residue chain is EPD1-interacting receptor-like cytoplasmic serine/threonine-protein kinase (463 aa).

Positions 91-383 constitute a Protein kinase domain; it reads FSSANFLGKG…LTDIPIGPFV (293 aa). Residues 97-105 and Lys126 each bind ATP; that span reads LGKGGFGPV. Residues Tyr171 and Tyr173 each carry the phosphotyrosine modification. Catalysis depends on Asp221, which acts as the Proton acceptor.

Belongs to the protein kinase superfamily. Ser/Thr protein kinase family. In terms of assembly, interacts with the V.dahliae elicitor EPD1 (AC G2WWH6). Post-translationally, phosphorylated at Tyr-171 and Tyr-173 in the presence of pathogen-associated molecular patterns (PAMPs); this triggers the expression of pathogenesis-related genes.

It localises to the cell membrane. It carries out the reaction L-seryl-[protein] + ATP = O-phospho-L-seryl-[protein] + ADP + H(+). The catalysed reaction is L-threonyl-[protein] + ATP = O-phospho-L-threonyl-[protein] + ADP + H(+). Functionally, required for pathogen-associated molecular pattern (PAMP, e.g. chitin and flg22)-triggered immunity (PTI) involving reactive oxygen species (ROS) accumulation and triggering plant defense, including defense-related gene expression (e.g. PR1 and LOX). Ensures specific recognition of the EPD1 effector of Verticillium dahliae, resulting in a hypersensitive response known as effector-triggered immunity (ETI), characterized by the activation of programmed cell death to limit infection by the pathogen. Priming plants with the incompatible pathogen V.dahliae leads to an increased resistance to both the broad-host-range filamentous pathogen Botrytis cinerea and the semibiotrophic pathogen Phytophthora capsici, as a result of systemic acquired resistance (SAR). The protein is EPD1-interacting receptor-like cytoplasmic serine/threonine-protein kinase of Nicotiana benthamiana.